A 590-amino-acid chain; its full sequence is Muscarinic acetylcholine receptor M3 (590 aa).

Residues 1-67 (MTLHNNNTTS…DPLGGHTIWQ (67 aa)) lie on the Extracellular side of the membrane. Residues asparagine 6, asparagine 7, asparagine 15, asparagine 41, asparagine 48, and asparagine 53 are each glycosylated (N-linked (GlcNAc...) asparagine). Residues 68–91 (VVFIAFLTGILALVTIIGNILVIV) form a helical membrane-spanning segment. Topologically, residues 92–104 (AFKVNKQLKTVNN) are cytoplasmic. A helical transmembrane segment spans residues 105–130 (YFLLSLACADLIIGVISMNLFTTYII). Over 131 to 142 (MNRWALGNLACD) the chain is Extracellular. Cysteine 141 and cysteine 221 are disulfide-bonded. A helical membrane pass occupies residues 143 to 164 (LWLSIDYVASNASVMNLLVISF). The Cytoplasmic segment spans residues 165-184 (DRYFSITRPLTYRAKRTTKR). The helical transmembrane segment at 185 to 206 (AGVMIGLAWVISFILWAPAILF) threads the bilayer. Topologically, residues 207–229 (WQYFVGKRTVPPGECFIQFLSEP) are extracellular. The chain crosses the membrane as a helical span at residues 230–252 (TITFGTAIAAFYMPVTIMTILYW). Residues 253 to 491 (RIYKETEKRT…SLIKEKKAAQ (239 aa)) are Cytoplasmic-facing. The Basolateral sorting signal signature appears at 275–281 (AEAENFV). The segment at 324 to 357 (AEQMDQDHSSSDSWNNNDAAASLENSASSDEEDI) is disordered. A compositionally biased stretch (low complexity) spans 334-345 (SDSWNNNDAAAS). Phosphoserine is present on serine 385. A helical transmembrane segment spans residues 492–514 (TLSAILLAFIITWTPYNIMVLVN). At 515-526 (TFCDSCIPKTYW) the chain is on the extracellular side. A disulfide bond links cysteine 517 and cysteine 520. A helical membrane pass occupies residues 527-546 (NLGYWLCYINSTVNPVCYAL). The Cytoplasmic portion of the chain corresponds to 547 to 590 (CNKTFRTTFKMLLLCQCDKRKRRKQQYQQRQSVIFHKRVPEQAL).

Belongs to the G-protein coupled receptor 1 family. Muscarinic acetylcholine receptor subfamily. CHRM3 sub-subfamily. As to quaternary structure, homodimer; the dimers can form tetramers. Interacts with NALCN. Interacts with TMEM147.

The protein resides in the cell membrane. The protein localises to the postsynaptic cell membrane. It is found in the basolateral cell membrane. Its subcellular location is the endoplasmic reticulum membrane. In terms of biological role, the muscarinic acetylcholine receptor mediates various cellular responses, including inhibition of adenylate cyclase, breakdown of phosphoinositides and modulation of potassium channels through the action of G proteins. Primary transducing effect is Pi turnover. The polypeptide is Muscarinic acetylcholine receptor M3 (CHRM3) (Sus scrofa (Pig)).